The following is a 206-amino-acid chain: Peroxynitrite isomerase (206 aa).

Positions 21 to 27 match the GXWXGXG motif; sequence GTWEGNG. His190 is a heme b binding site.

This sequence belongs to the nitrobindin family. As to quaternary structure, homodimer. Requires heme b as cofactor.

The catalysed reaction is peroxynitrite = nitrate. Its pathway is nitrogen metabolism. Heme-binding protein able to scavenge peroxynitrite and to protect free L-tyrosine against peroxynitrite-mediated nitration, by acting as a peroxynitrite isomerase that converts peroxynitrite to nitrate. Therefore, this protein likely plays a role in peroxynitrite sensing and in the detoxification of reactive nitrogen and oxygen species (RNS and ROS, respectively). Is able to bind nitric oxide (NO) in vitro, but may act as a sensor of peroxynitrite levels in vivo. The protein is Peroxynitrite isomerase of Kocuria rhizophila (strain ATCC 9341 / DSM 348 / NBRC 103217 / DC2201).